The sequence spans 224 residues: Response regulator protein GraR (224 aa).

The Response regulatory domain occupies 2 to 115; that stretch reads DILLVEDDMT…VLIAKLQAIY (114 aa). At aspartate 51 the chain carries 4-aspartylphosphate. Residues 126-224 constitute a DNA-binding region (ompR/PhoB-type); sequence KRVLSWQDAI…KIGKGYMAHG (99 aa).

Phosphorylated by GraS.

The protein localises to the cytoplasm. Member of the two-component regulatory system GraR/GraS involved in resistance against cationic antimicrobial peptides (CAMPs). The polypeptide is Response regulator protein GraR (graR) (Staphylococcus saprophyticus subsp. saprophyticus (strain ATCC 15305 / DSM 20229 / NCIMB 8711 / NCTC 7292 / S-41)).